Consider the following 365-residue polypeptide: 3-dehydroquinate synthase (365 aa).

NAD(+) contacts are provided by residues 106–110 (GVIGD), 130–131 (TT), lysine 142, lysine 151, and 169–172 (FFAT). Residues glutamate 184, histidine 247, and histidine 264 each coordinate Zn(2+).

The protein belongs to the sugar phosphate cyclases superfamily. Dehydroquinate synthase family. Co(2+) serves as cofactor. Requires Zn(2+) as cofactor. The cofactor is NAD(+).

It is found in the cytoplasm. The catalysed reaction is 7-phospho-2-dehydro-3-deoxy-D-arabino-heptonate = 3-dehydroquinate + phosphate. The protein operates within metabolic intermediate biosynthesis; chorismate biosynthesis; chorismate from D-erythrose 4-phosphate and phosphoenolpyruvate: step 2/7. Catalyzes the conversion of 3-deoxy-D-arabino-heptulosonate 7-phosphate (DAHP) to dehydroquinate (DHQ). The sequence is that of 3-dehydroquinate synthase from Listeria welshimeri serovar 6b (strain ATCC 35897 / DSM 20650 / CCUG 15529 / CIP 8149 / NCTC 11857 / SLCC 5334 / V8).